Reading from the N-terminus, the 447-residue chain is Probable glycine dehydrogenase (decarboxylating) subunit 1 (447 aa).

The protein belongs to the GcvP family. N-terminal subunit subfamily. The glycine cleavage system is composed of four proteins: P, T, L and H. In this organism, the P 'protein' is a heterodimer of two subunits.

It catalyses the reaction N(6)-[(R)-lipoyl]-L-lysyl-[glycine-cleavage complex H protein] + glycine + H(+) = N(6)-[(R)-S(8)-aminomethyldihydrolipoyl]-L-lysyl-[glycine-cleavage complex H protein] + CO2. In terms of biological role, the glycine cleavage system catalyzes the degradation of glycine. The P protein binds the alpha-amino group of glycine through its pyridoxal phosphate cofactor; CO(2) is released and the remaining methylamine moiety is then transferred to the lipoamide cofactor of the H protein. The protein is Probable glycine dehydrogenase (decarboxylating) subunit 1 of Halalkalibacterium halodurans (strain ATCC BAA-125 / DSM 18197 / FERM 7344 / JCM 9153 / C-125) (Bacillus halodurans).